Reading from the N-terminus, the 99-residue chain is Sm-like protein LSM7 (99 aa).

In terms of domain architecture, Sm spans 6–86 (ETVLDLAKFV…VMLVSPTDGT (81 aa)).

The protein belongs to the snRNP Sm proteins family. Component of the heptameric LSM1-LSM7 complex that forms a seven-membered ring structure with a donut shape. The LSM subunits are arranged in the order LSM1, LSM2, LSM3, LSM6, LSM5, LSM7 and LSM4. Component of the heptameric LSM2-LSM8 complex that forms a seven-membered ring structure with a donut shape. The LSM subunits are arranged in the order LSM8, LSM2, LSM3, LSM6, LSM5, LSM7 and LSM4. LSM7 subunit interacts only with its two neighboring subunits, LSM5 and LSM4. As to expression, expressed in roots, leaves, stems, flowers and siliques.

Its subcellular location is the cytoplasm. It is found in the nucleus. Functionally, component of LSM protein complexes, which are involved in RNA processing. Component of the cytoplasmic LSM1-LSM7 complex which is involved in mRNA degradation by promoting decapping and leading to accurate 5'-3' mRNA decay. The cytoplasmic LSM1-LSM7 complex regulates developmental gene expression by the decapping of specific development-related transcripts. Component of the nuclear LSM2-LSM8 complex which is involved splicing nuclear mRNAs. LSM2-LSM8 binds directly to the U6 small nuclear RNAs (snRNAs) and is essential for accurate splicing of selected development-related mRNAs through the stabilization of the spliceosomal U6 snRNA. Plays a critical role in the regulation of development-related gene expression. The polypeptide is Sm-like protein LSM7 (Arabidopsis thaliana (Mouse-ear cress)).